Consider the following 577-residue polypeptide: Glycine--tRNA ligase (577 aa).

Substrate contacts are provided by R98 and E164. ATP-binding positions include 196–198, 206–211, 328–329, and 451–454; these read RNE, IRLREF, EC, and GIDR. Residue 211-215 participates in substrate binding; sequence FTQAE. 447 to 451 contributes to the substrate binding site; sequence EPSYG.

Belongs to the class-II aminoacyl-tRNA synthetase family.

The protein localises to the cytoplasm. The catalysed reaction is tRNA(Gly) + glycine + ATP = glycyl-tRNA(Gly) + AMP + diphosphate. Functionally, catalyzes the attachment of glycine to tRNA(Gly). This is Glycine--tRNA ligase from Methanocaldococcus jannaschii (strain ATCC 43067 / DSM 2661 / JAL-1 / JCM 10045 / NBRC 100440) (Methanococcus jannaschii).